The primary structure comprises 580 residues: MSSSIVVIAAGERSTEAVLAAEALRRAATAAGRSVTIEIRSDQGVLGALPTELTNGAAHVLIVGDADADTARFGDAQLLHLSLGAVLDDPAAAVSQLAATTAPASTSATTDASGAGGKRIVAITSCPTGIAHTFMAAEGLQQAAKKLGYQMRVETQGSVGAQDALTDEEIRAADVVIIAADREVDLARFGGKRLFKSGTKPAINDGPALIQKALAEAGVHGGAAPVAGANATSDAKGNARTGAYKHLMTGVSFMLPFVTAGGLLIALAFALGGIYAGDDAHQGTLAWSLFQIGAKAGFTLMVPALAGYIAYSIADRPGIAPGMIGGLVAANLNAGFLGGIIAGFIAGYGVAALNRYIKLPRNLEGLKPVLILPVLGTLLVGLAMMYVFGQPVADLLAWLTAWLRGMQGSSALLLGLLLGGMMAFDMGGPVNKAAYAFSTGLIASQVYTPMAAAMVAGMTPPLGIALATWVFRNRFTVEERGSATAAGVLGLAFVTEGAIPYAARDPLRTIPALVIGSAVAGAISMTAGAELKAPHGGIFVLLIPNAVTHLLNYVLALVVGVVVTAVALRLLKKPVADVIA.

PTS EIIB type-2 domains follow at residues 1–99 (MSSS…QLAA) and 120–215 (IVAI…KALA). The active-site Phosphocysteine intermediate; for EIIB activity is Cys126. The residue at position 126 (Cys126) is a Phosphocysteine; by EIIA. A PTS EIIC type-2 domain is found at 243–580 (AYKHLMTGVS…LKKPVADVIA (338 aa)). Helical transmembrane passes span 254 to 274 (MLPF…LGGI), 289 to 309 (LFQI…AGYI), 332 to 352 (LNAG…GVAA), 369 to 389 (VLIL…YVFG), 410 to 430 (SALL…GGPV), 451 to 471 (AAAM…TWVF), 483 to 503 (ATAA…PYAA), 509 to 529 (TIPA…TAGA), and 549 to 571 (HLLN…LRLL).

The protein localises to the cell inner membrane. It carries out the reaction D-fructose(out) + N(pros)-phospho-L-histidyl-[protein] = D-fructose 1-phosphate(in) + L-histidyl-[protein]. In terms of biological role, the phosphoenolpyruvate-dependent sugar phosphotransferase system (sugar PTS), a major carbohydrate active transport system, catalyzes the phosphorylation of incoming sugar substrates concomitantly with their translocation across the cell membrane. The enzyme II FruAB PTS system is involved in fructose transport. This Xanthomonas campestris pv. campestris (strain ATCC 33913 / DSM 3586 / NCPPB 528 / LMG 568 / P 25) protein is PTS system fructose-specific EIIB'BC component.